A 397-amino-acid chain; its full sequence is Lipid-A-disaccharide synthase (397 aa).

It belongs to the LpxB family.

The enzyme catalyses a lipid X + a UDP-2-N,3-O-bis[(3R)-3-hydroxyacyl]-alpha-D-glucosamine = a lipid A disaccharide + UDP + H(+). Its pathway is bacterial outer membrane biogenesis; LPS lipid A biosynthesis. Its function is as follows. Condensation of UDP-2,3-diacylglucosamine and 2,3-diacylglucosamine-1-phosphate to form lipid A disaccharide, a precursor of lipid A, a phosphorylated glycolipid that anchors the lipopolysaccharide to the outer membrane of the cell. This is Lipid-A-disaccharide synthase from Mannheimia succiniciproducens (strain KCTC 0769BP / MBEL55E).